We begin with the raw amino-acid sequence, 174 residues long: CEN-like protein 1 (174 aa).

Belongs to the phosphatidylethanolamine-binding protein family. Expressed in vegetative axillary meristems but not in the main shoot meristem.

Its subcellular location is the cytoplasm. Functionally, may form complexes with phosphorylated ligands by interfering with kinases and their effectors. The chain is CEN-like protein 1 (CET1) from Nicotiana tabacum (Common tobacco).